The following is a 280-amino-acid chain: 4-diphosphocytidyl-2-C-methyl-D-erythritol kinase (280 aa).

Lys-9 is an active-site residue. Residue 93-103 (PVAAGLGGGSS) coordinates ATP. Asp-135 is a catalytic residue.

It belongs to the GHMP kinase family. IspE subfamily.

It catalyses the reaction 4-CDP-2-C-methyl-D-erythritol + ATP = 4-CDP-2-C-methyl-D-erythritol 2-phosphate + ADP + H(+). Its pathway is isoprenoid biosynthesis; isopentenyl diphosphate biosynthesis via DXP pathway; isopentenyl diphosphate from 1-deoxy-D-xylulose 5-phosphate: step 3/6. Its function is as follows. Catalyzes the phosphorylation of the position 2 hydroxy group of 4-diphosphocytidyl-2C-methyl-D-erythritol. This Syntrophotalea carbinolica (strain DSM 2380 / NBRC 103641 / GraBd1) (Pelobacter carbinolicus) protein is 4-diphosphocytidyl-2-C-methyl-D-erythritol kinase.